A 211-amino-acid polypeptide reads, in one-letter code: Endoplasmic reticulum vesicle protein 25 (211 aa).

A signal peptide spans 1-19; it reads MKSIVSVLTLLLLINAVAA. Residues 20–180 lie on the Lumenal side of the membrane; the sequence is LRFVLPAKDK…TNESTNRRVK (161 aa). The region spanning 33-121 is the GOLD domain; that stretch reads PFCVRDFVKN…TKEIDLSVAI (89 aa). Residues 181–201 traverse the membrane as a helical segment; the sequence is FFSVGITLALIALGVWQIIYL. Residues 202–211 lie on the Cytoplasmic side of the membrane; the sequence is RSYFRSKHII.

Belongs to the EMP24/GP25L family.

It localises to the endoplasmic reticulum membrane. The protein localises to the golgi apparatus membrane. In terms of biological role, constituent of COPII-coated endoplasmic reticulum-derived transport vesicles. Required for efficient transport of a subset of secretory proteins to the Golgi. Facilitates retrograde transport from the Golgi to the endoplasmic reticulum. The protein is Endoplasmic reticulum vesicle protein 25 (ERV25) of Yarrowia lipolytica (strain CLIB 122 / E 150) (Yeast).